A 361-amino-acid chain; its full sequence is DNA polymerase IV 3 (361 aa).

In terms of domain architecture, UmuC spans 12-192 (IIHVDMDAFY…LPVNKFHGVG (181 aa)). Mg(2+) is bound by residues D16 and D110. Residue E111 is part of the active site.

This sequence belongs to the DNA polymerase type-Y family. Monomer. Mg(2+) is required as a cofactor.

It localises to the cytoplasm. The catalysed reaction is DNA(n) + a 2'-deoxyribonucleoside 5'-triphosphate = DNA(n+1) + diphosphate. Its function is as follows. Poorly processive, error-prone DNA polymerase involved in untargeted mutagenesis. Copies undamaged DNA at stalled replication forks, which arise in vivo from mismatched or misaligned primer ends. These misaligned primers can be extended by PolIV. Exhibits no 3'-5' exonuclease (proofreading) activity. May be involved in translesional synthesis, in conjunction with the beta clamp from PolIII. This Mesorhizobium japonicum (strain LMG 29417 / CECT 9101 / MAFF 303099) (Mesorhizobium loti (strain MAFF 303099)) protein is DNA polymerase IV 3 (dinB3).